The primary structure comprises 200 residues: Transcription elongation factor A protein-like 6 (200 aa).

Positions 1 to 200 are disordered; the sequence is MEKPYNKNEG…QRGLHDIPYL (200 aa). The segment covering 20-36 has biased composition (acidic residues); the sequence is DEVEPDDEGKSDEEEKP. Serine 30 carries the post-translational modification Phosphoserine. Composition is skewed to basic and acidic residues over residues 37–52, 60–80, and 115–154; these read DAEG…KAEG, LEDK…KPQG, and DRGT…EELR. Serine 65 carries the post-translational modification Phosphoserine.

Belongs to the TFS-II family. TFA subfamily.

It localises to the nucleus. May be involved in transcriptional regulation. The sequence is that of Transcription elongation factor A protein-like 6 (TCEAL6) from Homo sapiens (Human).